The primary structure comprises 79 residues: MADAGARRPFFRRRKTCPFTGANAPKIDYKDSKLLMRYISERGKIVPSRITAVSAKKQRELARAVKRARFLGLLPYVIR.

Belongs to the bacterial ribosomal protein bS18 family. In terms of assembly, part of the 30S ribosomal subunit. Forms a tight heterodimer with protein bS6.

Its function is as follows. Binds as a heterodimer with protein bS6 to the central domain of the 16S rRNA, where it helps stabilize the platform of the 30S subunit. This is Small ribosomal subunit protein bS18 from Nitrobacter hamburgensis (strain DSM 10229 / NCIMB 13809 / X14).